A 641-amino-acid chain; its full sequence is Probable potassium transport system protein Kup (641 aa).

A compositionally biased stretch (polar residues) spans 1–14 (MALDSESSASNRQG). The disordered stretch occupies residues 1 to 20 (MALDSESSASNRQGSRNEQD). The next 12 membrane-spanning stretches (helical) occupy residues 29–49 (LCLT…LYAF), 69–89 (ILSL…LLII), 120–140 (VLIV…MITP), 156–176 (PQLT…LFMV), 188–208 (FGPI…NGII), 236–256 (VLGG…DMGH), 267–287 (FALV…LLLL), 307–327 (LVGL…SGVF), 355–375 (VYVP…VLHF), 384–404 (AFGI…FFVM), 410–430 (WNIL…LAFF), and 437–457 (ITDG…LMIT).

The protein belongs to the HAK/KUP transporter (TC 2.A.72) family.

It localises to the cell inner membrane. It catalyses the reaction K(+)(in) + H(+)(in) = K(+)(out) + H(+)(out). Transport of potassium into the cell. Likely operates as a K(+):H(+) symporter. In Nitrosomonas eutropha (strain DSM 101675 / C91 / Nm57), this protein is Probable potassium transport system protein Kup.